The chain runs to 358 residues: Aromatic amino acid aminotransferase (358 aa).

Residue K214 is modified to N6-(pyridoxal phosphate)lysine.

Belongs to the class-II pyridoxal-phosphate-dependent aminotransferase family. In terms of assembly, homodimer. It depends on pyridoxal 5'-phosphate as a cofactor.

The catalysed reaction is an aromatic L-alpha-amino acid + 2-oxoglutarate = an aromatic oxo-acid + L-glutamate. Aminotransferase that catalyzes the conversion of aromatic amino acids and 2-oxoglutarate into corresponding aromatic oxo acids and L-glutamate. This is Aromatic amino acid aminotransferase from Rhodococcus jostii (strain RHA1).